The sequence spans 201 residues: Small ribosomal subunit protein uS4c (201 aa).

Residues 17–44 (ALPGLTNKKPRTGSDLRNQSRSGKKSQY) form a disordered region. Residues 89–149 (MRLDNILFRL…DEQKSRALIQ (61 aa)) enclose the S4 RNA-binding domain.

Belongs to the universal ribosomal protein uS4 family. As to quaternary structure, part of the 30S ribosomal subunit. Contacts protein S5. The interaction surface between S4 and S5 is involved in control of translational fidelity.

The protein resides in the plastid. Its subcellular location is the chloroplast. Functionally, one of the primary rRNA binding proteins, it binds directly to 16S rRNA where it nucleates assembly of the body of the 30S subunit. With S5 and S12 plays an important role in translational accuracy. The polypeptide is Small ribosomal subunit protein uS4c (rps4) (Atropa belladonna (Belladonna)).